Reading from the N-terminus, the 366-residue chain is Transcription factor MYB28 (366 aa).

HTH myb-type domains follow at residues 9–61 (GEGL…TNYL) and 62–116 (KPEI…KKRL). 2 DNA-binding regions (H-T-H motif) span residues 37–61 (WRDI…TNYL) and 89–112 (WSVI…NTHL). The segment at 124–170 (VTHKPLASSSNPTVDENLNSPNASSSDKQYSRSSSMPFLSRPPPSSC) is disordered. A compositionally biased stretch (polar residues) spans 130–146 (ASSSNPTVDENLNSPNA). Positions 147–158 (SSSDKQYSRSSS) are enriched in low complexity.

As to quaternary structure, can form complexes with MYC2, MYC3 or MYC4. Expressed in generative organs, mature leaves and trichomes.

It localises to the nucleus. Major regulator of short-chained aliphatic glucosinolates (GLSs) biosynthesis. Together with MYB29/HAG3 and MYB76/HAG2, promotes aliphatic glucosinolate biosynthesis but represses indolic glucosinolate biosynthesis. Prevents insect performance (e.g. lepidopteran insect Mamestra brassicae and Spodoptera exigua) by promoting glucosinolates. The chain is Transcription factor MYB28 (MYB28) from Arabidopsis thaliana (Mouse-ear cress).